The following is a 104-amino-acid chain: Large ribosomal subunit protein eL42 (104 aa).

Belongs to the eukaryotic ribosomal protein eL42 family. In terms of assembly, component of the large ribosomal subunit. Mature ribosomes consist of a small (40S) and a large (60S) subunit. The 40S subunit contains about 32 different proteins and 1 molecule of RNA (18S). The 60S subunit contains about 42 different proteins and 3 molecules of RNA (28S, 5.8S and 5S).

It is found in the cytoplasm. Its function is as follows. Component of the ribosome, a large ribonucleoprotein complex responsible for the synthesis of proteins in the cell. The small ribosomal subunit (SSU) binds messenger RNAs (mRNAs) and translates the encoded message by selecting cognate aminoacyl-transfer RNA (tRNA) molecules. The large subunit (LSU) contains the ribosomal catalytic site termed the peptidyl transferase center (PTC), which catalyzes the formation of peptide bonds, thereby polymerizing the amino acids delivered by tRNAs into a polypeptide chain. The nascent polypeptides leave the ribosome through a tunnel in the LSU and interact with protein factors that function in enzymatic processing, targeting, and the membrane insertion of nascent chains at the exit of the ribosomal tunnel. This chain is Large ribosomal subunit protein eL42, found in Plasmodium falciparum (isolate 3D7).